The following is a 732-amino-acid chain: B-cadherin (732 aa).

The propeptide occupies 1-6; that stretch reads LRRQKR. 5 Cadherin domains span residues 6–114, 115–227, 228–339, 340–443, and 444–554; these read RDWV…KPQF, TQEV…APEF, DPKT…APVF, DPPL…VNDH, and GPEP…RVDT. Topologically, residues 6 to 554 are extracellular; sequence RDWVIPPIKV…SCAQKPRVDT (549 aa). Asn137 carries an N-linked (GlcNAc...) asparagine glycan. N-linked (GlcNAc...) asparagine glycosylation is present at Asn410. The chain crosses the membrane as a helical span at residues 555 to 580; the sequence is GVPIVLAVLGAVLALLLVLLLLLLLV. Residues 581–732 are Cytoplasmic-facing; it reads RRRKVVKEPL…ELYGGGEDEE (152 aa).

Expressed in a wide variety of tissues.

The protein resides in the cell membrane. In terms of biological role, cadherins are calcium-dependent cell adhesion proteins. They preferentially interact with themselves in a homophilic manner in connecting cells; cadherins may thus contribute to the sorting of heterogeneous cell types. B-cadherin may have important functions in neurogenesis, in at least some epithelia, and in embryogenesis. The chain is B-cadherin (K-CAM) from Gallus gallus (Chicken).